A 134-amino-acid chain; its full sequence is Profilin-2 (134 aa).

An intrachain disulfide couples Cys13 to Cys118. The short motif at 84 to 100 is the Involved in PIP2 interaction element; the sequence is AVIRGKKGSGGITIKKT. Phosphothreonine is present on Thr114.

This sequence belongs to the profilin family. Occurs in many kinds of cells as a complex with monomeric actin in a 1:1 ratio. In terms of processing, phosphorylated by MAP kinases.

Its subcellular location is the cytoplasm. The protein resides in the cytoskeleton. Functionally, binds to actin and affects the structure of the cytoskeleton. At high concentrations, profilin prevents the polymerization of actin, whereas it enhances it at low concentrations. The polypeptide is Profilin-2 (Olea europaea (Common olive)).